The primary structure comprises 1985 residues: Treslin (1985 aa).

Disordered regions lie at residues 574–609 (AQKADSTLPVPNEKNSQMKRRSSGKQDNKPKQLKPT), 791–858 (EEKS…QPNK), 894–974 (IQET…SIVE), 999–1033 (RRNSSSFYASQPKSRNLERVNSATQLQQSRERPGS), 1072–1156 (VYKT…LWGR), 1184–1243 (VKTP…PSGY), 1849–1875 (HEDSSTATHRHQTKEEMEIFSSDQSRS), and 1938–1966 (FSDGDSDHGTPTLKRPTNPAAVSDDSPFR). A compositionally biased stretch (basic residues) spans 823 to 837 (RSAKKRRSTALARHR). The segment covering 964 to 974 (SESNSNISIVE) has biased composition (low complexity). Polar residues-rich tracts occupy residues 999–1026 (RRNSSSFYASQPKSRNLERVNSATQLQQ) and 1085–1097 (SKNIPNFEDQSGN). Residues 1105-1114 (TPYTPRTPSR) show a composition bias toward low complexity. Basic and acidic residues-rich tracts occupy residues 1144 to 1156 (KPEEKSPLKLWGR) and 1191 to 1200 (QRLESKDFRT). Residues 1201–1224 (PSRTPTRSNNTTPAKQSMQISNTP) show a composition bias toward polar residues. Residues 1225–1238 (RKSDLKHPQEHESR) are compositionally biased toward basic and acidic residues.

Belongs to the treslin family. As to quaternary structure, interacts with topbp1 (via BRCT domains); interaction is cdk2-dependent. Component of the replisome complex. In terms of processing, phosphorylated during interphase. Cdk2 promotes both phosphorylation and formation of a ticrr-topbp1 complex.

The protein resides in the nucleus. Functionally, regulator of DNA replication and S/M and G2/M checkpoints. Regulates the triggering of DNA replication initiation via its interaction with topbp1 by participating in cdk2-mediated loading of cdc45l onto replication origins. Required for the transition from pre-replication complex (pre-RC) to pre-initiation complex (pre-IC). Required to prevent mitotic entry after treatment with ionizing radiation. The polypeptide is Treslin (ticrr) (Xenopus laevis (African clawed frog)).